The sequence spans 360 residues: Phospho-N-acetylmuramoyl-pentapeptide-transferase (360 aa).

10 consecutive transmembrane segments (helical) span residues 18–38 (VFSY…FISL), 73–93 (TMGG…WADL), 94–114 (SNIY…VGFV), 134–154 (YFWQ…IAQG), 168–188 (LLPQ…VGTS), 199–219 (GLAI…AYVT), 239–259 (LVIV…FNTY), 263–283 (VFMG…IAIL), 288–308 (LVLF…ILQV), and 338–358 (VIVR…ATLK).

It belongs to the glycosyltransferase 4 family. MraY subfamily. It depends on Mg(2+) as a cofactor.

It localises to the cell inner membrane. It catalyses the reaction UDP-N-acetyl-alpha-D-muramoyl-L-alanyl-gamma-D-glutamyl-meso-2,6-diaminopimeloyl-D-alanyl-D-alanine + di-trans,octa-cis-undecaprenyl phosphate = di-trans,octa-cis-undecaprenyl diphospho-N-acetyl-alpha-D-muramoyl-L-alanyl-D-glutamyl-meso-2,6-diaminopimeloyl-D-alanyl-D-alanine + UMP. Its pathway is cell wall biogenesis; peptidoglycan biosynthesis. Functionally, catalyzes the initial step of the lipid cycle reactions in the biosynthesis of the cell wall peptidoglycan: transfers peptidoglycan precursor phospho-MurNAc-pentapeptide from UDP-MurNAc-pentapeptide onto the lipid carrier undecaprenyl phosphate, yielding undecaprenyl-pyrophosphoryl-MurNAc-pentapeptide, known as lipid I. The sequence is that of Phospho-N-acetylmuramoyl-pentapeptide-transferase from Colwellia psychrerythraea (strain 34H / ATCC BAA-681) (Vibrio psychroerythus).